Consider the following 301-residue polypeptide: 2-(hydroxymethyl)glutarate dehydrogenase (301 aa).

NAD(+)-binding positions include 8–22 (GFIG…MAIN) and serine 99. The active site involves lysine 174. Lysine 243 is a binding site for NAD(+).

It belongs to the HIBADH-related family. In terms of assembly, homotetramer.

It catalyses the reaction (S)-2-hydroxymethylglutarate + NAD(+) = 2-formylglutarate + NADH + H(+). It functions in the pathway cofactor degradation; nicotinate degradation; propanoate and pyruvate from 6-hydroxynicotinate: step 3/8. In terms of biological role, catalyzes the conversion of 2-formylglutarate to (S)-2-hydroxymethylglutarate. Has very low activity with (S)-3-hydroxyisobutyrate. This chain is 2-(hydroxymethyl)glutarate dehydrogenase, found in Eubacterium barkeri (Clostridium barkeri).